A 363-amino-acid polypeptide reads, in one-letter code: Type-2 angiotensin II receptor (363 aa).

Over 1–45 (MKDNFSFAATSRNITSSRPFDNLNATGTNESAFNCSHKPSDKHLE) the chain is Extracellular. 5 N-linked (GlcNAc...) asparagine glycosylation sites follow: N4, N13, N24, N29, and N34. Intrachain disulfides connect C35-C290 and C117-C195. A helical transmembrane segment spans residues 46-70 (AIPVLYYMIFVIGFAVNIVVVSLFC). Residues 71–80 (CQKGPKKVSS) are Cytoplasmic-facing. Residues 81-104 (IYIFNLALADLLLLATLPLWATYY) traverse the membrane as a helical segment. Angiotensin II contacts are provided by Y103 and Y104. The Extracellular segment spans residues 105-114 (SYRYDWLFGP). The chain crosses the membrane as a helical span at residues 115–140 (VMCKVFGSFLTLNMFASIFFITCMSV). Residues 141–159 (DRYQSVIYPFLSQRRNPWQ) lie on the Cytoplasmic side of the membrane. The helical transmembrane segment at 160 to 181 (ASYVVPLVWCMACLSSLPTFYF) threads the bilayer. Angiotensin II-binding residues include R182, Y204, and K215. Topologically, residues 182 to 206 (RDVRTIEYLGVNACIMAFPPEKYAQ) are extracellular. Residues 207–232 (WSAGIALMKNILGFIIPLIFIATCYF) form a helical membrane-spanning segment. Over 233–257 (GIRKHLLKTNSYGKNRITRDQVLKM) the chain is Cytoplasmic. Residues 258–281 (AAAVVLAFIICWLPFHVLTFLDAL) traverse the membrane as a helical segment. Residue D279 coordinates angiotensin II. Residues 282-294 (TWMGIINSCEVIA) are Extracellular-facing. The chain crosses the membrane as a helical span at residues 295–320 (VIDLALPFAILLGFTNSCVNPFLYCF). D297 serves as a coordination point for angiotensin II. The Cytoplasmic portion of the chain corresponds to 321-363 (VGNRFQQKLRSVFRVPITWLQGKRETMSCRKGSSLREMDTFVS). Residues 324 to 333 (RFQQKLRSVF) are helix VIII. Phosphoserine; by PKC is present on S354.

The protein belongs to the G-protein coupled receptor 1 family. In terms of assembly, interacts with MTUS1. Expressed at highest levels in adrenal gland and uterus.

Its subcellular location is the cell membrane. In terms of biological role, receptor for angiotensin II, a vasoconstricting peptide. Signals primarily via a non-canonical G-protein- and beta-arrestin independent pathways. Cooperates with MTUS1 to inhibit ERK2 activation and cell proliferation. This Mus musculus (Mouse) protein is Type-2 angiotensin II receptor.